Here is a 303-residue protein sequence, read N- to C-terminus: Cell division protein ZipA (303 aa).

At 1 to 6 (MMQDLR) the chain is on the periplasmic side. Residues 7-27 (LILIIVGAIAIIALLLHGLWT) traverse the membrane as a helical segment. Over 28-303 (SRKERSSLFR…RIRSTLGVQV (276 aa)) the chain is Cytoplasmic. Disordered regions lie at residues 39-61 (RPVK…DEAF), 66-85 (KPYA…EPAI), and 124-159 (EQEP…GEKE). Basic and acidic residues-rich tracts occupy residues 75–85 (SHQEYKAEPAI) and 139–159 (ESER…GEKE).

It belongs to the ZipA family. Interacts with FtsZ via their C-terminal domains.

The protein localises to the cell inner membrane. In terms of biological role, essential cell division protein that stabilizes the FtsZ protofilaments by cross-linking them and that serves as a cytoplasmic membrane anchor for the Z ring. Also required for the recruitment to the septal ring of downstream cell division proteins. The chain is Cell division protein ZipA from Photorhabdus laumondii subsp. laumondii (strain DSM 15139 / CIP 105565 / TT01) (Photorhabdus luminescens subsp. laumondii).